Here is a 122-residue protein sequence, read N- to C-terminus: MIQQETRLKVADNSGAREILTIKVLGGSGHKFANIGDVIVASVKQATPGGAVKKGDVVKAVIVRTKTGARRPDGSYIKFDDNAAVIIRDDKTPRGTRIFGPVARELREGGYMKIVSLAPEVL.

It belongs to the universal ribosomal protein uL14 family. As to quaternary structure, part of the 50S ribosomal subunit. Forms a cluster with proteins L3 and L19. In the 70S ribosome, L14 and L19 interact and together make contacts with the 16S rRNA in bridges B5 and B8.

Its function is as follows. Binds to 23S rRNA. Forms part of two intersubunit bridges in the 70S ribosome. The polypeptide is Large ribosomal subunit protein uL14 (Streptococcus pyogenes serotype M2 (strain MGAS10270)).